The sequence spans 332 residues: Phosphoribulokinase (332 aa).

Belongs to the phosphoribulokinase family.

The enzyme catalyses D-ribulose 5-phosphate + ATP = D-ribulose 1,5-bisphosphate + ADP + H(+). It functions in the pathway carbohydrate biosynthesis; Calvin cycle. The chain is Phosphoribulokinase (prk) from Synechocystis sp. (strain ATCC 27184 / PCC 6803 / Kazusa).